We begin with the raw amino-acid sequence, 486 residues long: UDP-N-acetylmuramate--L-alanine ligase (486 aa).

Residue 123-129 coordinates ATP; that stretch reads GTHGKTT.

Belongs to the MurCDEF family.

It is found in the cytoplasm. It carries out the reaction UDP-N-acetyl-alpha-D-muramate + L-alanine + ATP = UDP-N-acetyl-alpha-D-muramoyl-L-alanine + ADP + phosphate + H(+). Its pathway is cell wall biogenesis; peptidoglycan biosynthesis. Functionally, cell wall formation. The sequence is that of UDP-N-acetylmuramate--L-alanine ligase from Pseudomonas savastanoi pv. phaseolicola (strain 1448A / Race 6) (Pseudomonas syringae pv. phaseolicola (strain 1448A / Race 6)).